A 407-amino-acid polypeptide reads, in one-letter code: Aminomethyltransferase, mitochondrial (407 aa).

The transit peptide at 1–29 (MRGGLWQLGQSITRRLGQSDKKTIVRRCY) directs the protein to the mitochondrion. 3 residues coordinate substrate: Glu234, Arg265, and Tyr403.

The protein belongs to the GcvT family. As to quaternary structure, the glycine cleavage system is composed of four proteins: P, T, L and H.

Its subcellular location is the mitochondrion. It carries out the reaction N(6)-[(R)-S(8)-aminomethyldihydrolipoyl]-L-lysyl-[protein] + (6S)-5,6,7,8-tetrahydrofolate = N(6)-[(R)-dihydrolipoyl]-L-lysyl-[protein] + (6R)-5,10-methylene-5,6,7,8-tetrahydrofolate + NH4(+). In terms of biological role, the glycine cleavage system catalyzes the degradation of glycine. This chain is Aminomethyltransferase, mitochondrial (GDCST), found in Flaveria anomala (Yellowtops).